Reading from the N-terminus, the 343-residue chain is Versiconal hemiacetal acetate reductase (343 aa).

The active-site Proton donor is the Y59. H144 contributes to the substrate binding site. 229-239 (SPVARGALARP) serves as a coordination point for NADP(+).

It belongs to the aldo/keto reductase family. Aldo/keto reductase 2 subfamily.

The enzyme catalyses (2S)-versicolorone + NADP(+) = 1'-hydroxyversicolorone + NADPH + H(+). It catalyses the reaction (3S)-versiconol acetate + NADP(+) = (2S,3S)-versiconal hemiacetal acetate + NADPH + H(+). It carries out the reaction (S)-versiconol + NADP(+) = (2S-3S)-versiconal hemiacetal + NADPH + H(+). Its function is as follows. Catalyzes 3 reactions: from hydroxyversicolorone (HVN) to versicolorone (VONE), from versiconal hemiacetal acetate (VHA) to versiconol acetate (VOAc) and from versiconal (VHOH) to versiconol (VOH). Probably not an aflatoxin biosynthesis gene: may be involved in the vertical branching steps connecting the main pathway from HVN to VHOH with the side pathway from VONE to VOH. The chain is Versiconal hemiacetal acetate reductase (vrdA) from Aspergillus parasiticus.